Reading from the N-terminus, the 538-residue chain is Putative cysteine ligase BshC (538 aa).

A coiled-coil region spans residues 460-484 (KINEQIELLERMLKRNVEKKHEVEL).

Belongs to the BshC family.

Involved in bacillithiol (BSH) biosynthesis. May catalyze the last step of the pathway, the addition of cysteine to glucosamine malate (GlcN-Mal) to generate BSH. The polypeptide is Putative cysteine ligase BshC (Bacillus cereus (strain ATCC 10987 / NRS 248)).